The primary structure comprises 1028 residues: Unconventional myosin-Ic-A (1028 aa).

An N-acetylmethionine modification is found at Met-1. The region spanning Gly-12 to Glu-696 is the Myosin motor domain. Gly-105 to Thr-112 contacts ATP. At Lys-348 the chain carries N6-methyllysine. The actin-binding stretch occupies residues Leu-573–Asp-595. 2 IQ domains span residues Lys-699 to Asn-728 and Met-722 to Val-751. Residues Lys-850–Arg-1024 form the TH1 domain.

It belongs to the TRAFAC class myosin-kinesin ATPase superfamily. Myosin family. As to quaternary structure, interacts (via its IQ motifs) with calmodulin.

The protein resides in the cytoplasm. Its subcellular location is the cell membrane. It is found in the cell projection. It localises to the stereocilium membrane. In terms of biological role, myosins are actin-based motor molecules with ATPase activity. Unconventional myosins serve in intracellular movements. Their highly divergent tails are presumed to bind to membranous compartments, which would be moved relative to actin filaments. Involved in egg activation by coupling dynamic actin to membrane. This Xenopus laevis (African clawed frog) protein is Unconventional myosin-Ic-A (myo1c-a).